A 323-amino-acid polypeptide reads, in one-letter code: NAC transcription factor 25 (323 aa).

The 162-residue stretch at 16-177 folds into the NAC domain; the sequence is LPPGFRFHPT…DWVLCRIYKK (162 aa). A DNA-binding region spans residues 114 to 183; that stretch reads VGVKKALVFY…IYKKNSSQRP (70 aa). Low complexity predominate over residues 201–221; the sequence is KSSANSSSTSVLDNNDNNNNN. The segment at 201–223 is disordered; it reads KSSANSSSTSVLDNNDNNNNNNE.

As to expression, expressed specifically in the tapetum.

It localises to the nucleus. Its function is as follows. Transcription factor of the NAC family. May be associated with anther development and pollen production. Required for normal seed development and morphology. The chain is NAC transcription factor 25 (NAC025) from Arabidopsis thaliana (Mouse-ear cress).